The primary structure comprises 105 residues: Urease subunit beta (105 aa).

The protein belongs to the urease beta subunit family. As to quaternary structure, heterotrimer of UreA (gamma), UreB (beta) and UreC (alpha) subunits. Three heterotrimers associate to form the active enzyme.

It is found in the cytoplasm. It catalyses the reaction urea + 2 H2O + H(+) = hydrogencarbonate + 2 NH4(+). It participates in nitrogen metabolism; urea degradation; CO(2) and NH(3) from urea (urease route): step 1/1. This chain is Urease subunit beta, found in Pseudomonas putida (strain W619).